Here is a 75-residue protein sequence, read N- to C-terminus: Dermaseptin-A3 (75 aa).

An N-terminal signal peptide occupies residues 1–22 (MAFLKKSLFLVLLLGLISLSIC). Residues 23-43 (EEEKRENEVEEEQEDDEQSEL) constitute a propeptide that is removed on maturation. Glutamine 72 bears the Glutamine amide mark. Residues 74-75 (EQ) constitute a propeptide that is removed on maturation.

The protein belongs to the frog skin active peptide (FSAP) family. Dermaseptin subfamily. As to expression, expressed by the skin glands.

Its subcellular location is the secreted. Possesses a potent antimicrobial activity against Gram-positive and Gram-negative bacteria. Probably acts by disturbing membrane functions with its amphipathic structure. The chain is Dermaseptin-A3 from Agalychnis annae (Blue-sided leaf frog).